The primary structure comprises 342 residues: S-adenosylmethionine:tRNA ribosyltransferase-isomerase (342 aa).

This sequence belongs to the QueA family. As to quaternary structure, monomer.

Its subcellular location is the cytoplasm. The enzyme catalyses 7-aminomethyl-7-carbaguanosine(34) in tRNA + S-adenosyl-L-methionine = epoxyqueuosine(34) in tRNA + adenine + L-methionine + 2 H(+). It participates in tRNA modification; tRNA-queuosine biosynthesis. In terms of biological role, transfers and isomerizes the ribose moiety from AdoMet to the 7-aminomethyl group of 7-deazaguanine (preQ1-tRNA) to give epoxyqueuosine (oQ-tRNA). This is S-adenosylmethionine:tRNA ribosyltransferase-isomerase from Listeria monocytogenes serotype 4b (strain F2365).